The following is a 47-amino-acid chain: Small, acid-soluble spore protein N (47 aa).

A disordered region spans residues 1-47 (MSNPKRSPNHFAPNHIGTQPRAAGGNKGKQMQDQSGQHAQVIQTKGE). The span at 29 to 47 (KQMQDQSGQHAQVIQTKGE) shows a compositional bias: polar residues.

The protein belongs to the SspN family.

The protein resides in the spore core. The polypeptide is Small, acid-soluble spore protein N (Geobacillus thermodenitrificans (strain NG80-2)).